A 163-amino-acid polypeptide reads, in one-letter code: Aspartate carbamoyltransferase regulatory chain (163 aa).

Zn(2+) contacts are provided by cysteine 113, cysteine 118, cysteine 143, and cysteine 146.

The protein belongs to the PyrI family. As to quaternary structure, contains catalytic and regulatory chains. Zn(2+) serves as cofactor.

In terms of biological role, involved in allosteric regulation of aspartate carbamoyltransferase. The protein is Aspartate carbamoyltransferase regulatory chain of Caldivirga maquilingensis (strain ATCC 700844 / DSM 13496 / JCM 10307 / IC-167).